The following is a 148-amino-acid chain: Large ribosomal subunit protein bL9 (148 aa).

The protein belongs to the bacterial ribosomal protein bL9 family.

In terms of biological role, binds to the 23S rRNA. The protein is Large ribosomal subunit protein bL9 of Alkaliphilus oremlandii (strain OhILAs) (Clostridium oremlandii (strain OhILAs)).